The chain runs to 58 residues: ATP synthase F(0) complex subunit k, mitochondrial (58 aa).

K16 and K17 each carry N6-acetyllysine. Residues 23–45 (TLTGRMNCVLATYGGIALLVLYF) form a helical membrane-spanning segment.

As to quaternary structure, component of the ATP synthase complex composed at least of ATP5F1A/subunit alpha, ATP5F1B/subunit beta, ATP5MC1/subunit c (homooctomer), MT-ATP6/subunit a, MT-ATP8/subunit 8, ATP5ME/subunit e, ATP5MF/subunit f, ATP5MG/subunit g, ATP5MK/subunit k, ATP5MJ/subunit j, ATP5F1C/subunit gamma, ATP5F1D/subunit delta, ATP5F1E/subunit epsilon, ATP5PF/subunit F6, ATP5PB/subunit b, ATP5PD/subunit d, ATP5PO/subunit OSCP. ATP synthase complex consists of a soluble F(1) head domain (subunits alpha(3) and beta(3)) - the catalytic core - and a membrane F(0) domain - the membrane proton channel (subunits c, a, 8, e, f, g, k and j). These two domains are linked by a central stalk (subunits gamma, delta, and epsilon) rotating inside the F1 region and a stationary peripheral stalk (subunits F6, b, d, and OSCP). The ATP synthase complex/complex V exists as a monomeric and a dimeric supercomplex that helps shape mitochondrial cristae to optimize proton flow. In terms of tissue distribution, ubiquitous. Highly expressed in skeletal and cardiac muscle. Moderately expressed in brain, thymus, stomach and testis. Lowest expression levels were detected in lung, liver, kidney, adrenal gland, spleen, small intestine and adipose tissue. In streptozotocin-induced diabetes, the insulin-sensitive tissues skeletal and cardiac muscle were down-regulated.

The protein localises to the mitochondrion membrane. Functionally, subunit k, of the mitochondrial membrane ATP synthase complex (F(1)F(0) ATP synthase or Complex V) that produces ATP from ADP in the presence of a proton gradient across the membrane which is generated by electron transport complexes of the respiratory chain. ATP synthase complex consist of a soluble F(1) head domain - the catalytic core - and a membrane F(1) domain - the membrane proton channel. These two domains are linked by a central stalk rotating inside the F(1) region and a stationary peripheral stalk. During catalysis, ATP synthesis in the catalytic domain of F(1) is coupled via a rotary mechanism of the central stalk subunits to proton translocation. In vivo, can only synthesize ATP although its ATP hydrolase activity can be activated artificially in vitro. Part of the complex F(0) domain. Required for dimerization of the ATP synthase complex and as such regulates ATP synthesis in the mitochondria. In Rattus norvegicus (Rat), this protein is ATP synthase F(0) complex subunit k, mitochondrial (Atp5mk).